We begin with the raw amino-acid sequence, 329 residues long: Probable acyltransferase FabY (329 aa).

Residues 18–162 (YHLRVPQTEE…RHFLMIKPVA (145 aa)) enclose the N-acetyltransferase domain.

The protein belongs to the acetyltransferase family. FabY subfamily.

Its pathway is lipid metabolism; fatty acid biosynthesis. Supports initiation of fatty acid biosynthesis in the absence of FabH. The polypeptide is Probable acyltransferase FabY (Escherichia coli O157:H7).